Reading from the N-terminus, the 628-residue chain is MNLEEIQDPSFLKNYSNKQLEELAADIRRFLIEKLSATGGHIGPNLGVVELTLALHQLFDSPKDKLLWDVGHQAYVHKILTGRAPQFDTLRQYKGLCGFPKRTESEHDVWETGHSSTSLSGAMGMATARDLKGTNENIVAIIGDGALTGGMALEALNHIGHEQKHLIVVLNDNEMSIAPNVGALHSILGRLRTAGKYQKAKEDLETIIRKIPAFGGKLADTAERLKDSLKYLMVSGMFFEEMGFTYLGPVDGHDLDDLKHQLSYAKKTSGPVLVHVLTKKGKGYKPAEEDATGAWHGTGPYKMESGEMVKKPGPPSYPSVFANTLKRIAREDERVVAITPAMPGGSKLDLFAEEFPDRMFDVGIAEQHAATMSAGLATQGMKPVYAVYSTFLQRGYDQVVHDICRQNLNVLIAIDRAGLVGADGETHQGVFDIAFLRSLPNITILNPKDENEFQHMLYTGICYDDGPIAIRYPRGNGTGVKMDASLSRLPIGKWNVLQEGTDAAILTFGTMIPVAEKALAQLKQAGYNIRLINANSVKPLDEKLLEALAEEELPLLTIEESVLQGGFGSAVLEFYNEKGMHVELKRMGIPDYFVEHGSVSELYQEVGLTPERIADTLISMLPQKRKRA.

Thiamine diphosphate contacts are provided by residues His72 and 113-115; that span reads GHS. A Mg(2+)-binding site is contributed by Asp144. Residues 145 to 146, Asn173, Tyr284, and Glu366 contribute to the thiamine diphosphate site; that span reads GA. Asn173 is a Mg(2+) binding site.

This sequence belongs to the transketolase family. DXPS subfamily. In terms of assembly, homodimer. Mg(2+) is required as a cofactor. Requires thiamine diphosphate as cofactor.

It catalyses the reaction D-glyceraldehyde 3-phosphate + pyruvate + H(+) = 1-deoxy-D-xylulose 5-phosphate + CO2. It participates in metabolic intermediate biosynthesis; 1-deoxy-D-xylulose 5-phosphate biosynthesis; 1-deoxy-D-xylulose 5-phosphate from D-glyceraldehyde 3-phosphate and pyruvate: step 1/1. Its function is as follows. Catalyzes the acyloin condensation reaction between C atoms 2 and 3 of pyruvate and glyceraldehyde 3-phosphate to yield 1-deoxy-D-xylulose-5-phosphate (DXP). This is 1-deoxy-D-xylulose-5-phosphate synthase from Shouchella clausii (strain KSM-K16) (Alkalihalobacillus clausii).